Consider the following 120-residue polypeptide: Large ribosomal subunit protein bL12 (120 aa).

It belongs to the bacterial ribosomal protein bL12 family. Homodimer. Part of the ribosomal stalk of the 50S ribosomal subunit. Forms a multimeric L10(L12)X complex, where L10 forms an elongated spine to which 2 to 4 L12 dimers bind in a sequential fashion. Binds GTP-bound translation factors.

Functionally, forms part of the ribosomal stalk which helps the ribosome interact with GTP-bound translation factors. Is thus essential for accurate translation. This is Large ribosomal subunit protein bL12 from Brevibacillus brevis (strain 47 / JCM 6285 / NBRC 100599).